Reading from the N-terminus, the 307-residue chain is Pantothenate kinase (307 aa).

90-97 lines the ATP pocket; sequence GSVAVGKS.

It belongs to the prokaryotic pantothenate kinase family.

It is found in the cytoplasm. It carries out the reaction (R)-pantothenate + ATP = (R)-4'-phosphopantothenate + ADP + H(+). It participates in cofactor biosynthesis; coenzyme A biosynthesis; CoA from (R)-pantothenate: step 1/5. The chain is Pantothenate kinase from Limosilactobacillus reuteri subsp. reuteri (strain JCM 1112) (Lactobacillus reuteri).